The sequence spans 241 residues: Diacetyl reductase [(S)-acetoin forming] (241 aa).

Residue 6-30 (LVTGAGQGIGKAIALRLVKDGFAVA) participates in NAD(+) binding. S139 is a binding site for substrate. The active-site Proton acceptor is Y152. Residue K156 is part of the active site.

This sequence belongs to the short-chain dehydrogenases/reductases (SDR) family. As to quaternary structure, homotetramer.

The enzyme catalyses (S)-acetoin + NAD(+) = diacetyl + NADH + H(+). In terms of biological role, catalyzes the irreversible reduction of 2,3-butanediol to (S)-acetoin in the presence of NADH. In Raoultella terrigena (Klebsiella terrigena), this protein is Diacetyl reductase [(S)-acetoin forming] (budC).